Here is a 205-residue protein sequence, read N- to C-terminus: Protein phosphatase inhibitor 2 family member B (205 aa).

The segment at 1–44 (MAASTASHRPIKGILKNKTSTTSSMVASAEQPRRSVDEELSKKS) is disordered. Ala-2 carries the post-translational modification N-acetylalanine. Required for binding PPP1CC stretches follow at residues 12–17 (KGILKN) and 43–55 (KSQK…ILAT). The span at 17-26 (NKTSTTSSMV) shows a compositional bias: polar residues. A compositionally biased stretch (basic and acidic residues) spans 31–44 (QPRRSVDEELSKKS). Ser-44 bears the Phosphoserine mark. Thr-89 and Thr-92 each carry phosphothreonine. Residues 111 to 142 (EPKYRIQEQESSGEEDSDLSPEEREKKRQFEM) form a disordered region. A phosphoserine mark is found at Ser-121, Ser-122, Ser-127, and Ser-130. Residues 121-130 (SSGEEDSDLS) are compositionally biased toward acidic residues. Positions 131 to 142 (PEEREKKRQFEM) are enriched in basic and acidic residues. The required for binding PPP1CC catalytic center, displacing metal ions and inhibition of PPP1CC catalytic activity stretch occupies residues 147–150 (HYNE). The tract at residues 163-205 (KDLHDDDEDEEMLETADGESMNTEESNQGSTPSDQQQNKLRSS) is disordered. Positions 167 to 179 (DDDEDEEMLETAD) are enriched in acidic residues. Residues 182-205 (SMNTEESNQGSTPSDQQQNKLRSS) are compositionally biased toward polar residues.

This sequence belongs to the protein phosphatase inhibitor 2 family. Interacts with PPP1CC. Only detected in spermatozoa, both heads and tails.

Inhibitor of protein-phosphatase 1. The sequence is that of Protein phosphatase inhibitor 2 family member B from Homo sapiens (Human).